Reading from the N-terminus, the 86-residue chain is Large ribosomal subunit protein uL23 (86 aa).

This sequence belongs to the universal ribosomal protein uL23 family. In terms of assembly, part of the 50S ribosomal subunit. Contacts protein L29.

In terms of biological role, binds to 23S rRNA. One of the proteins that surrounds the polypeptide exit tunnel on the outside of the ribosome. The chain is Large ribosomal subunit protein uL23 from Methanothermobacter thermautotrophicus (strain ATCC 29096 / DSM 1053 / JCM 10044 / NBRC 100330 / Delta H) (Methanobacterium thermoautotrophicum).